The primary structure comprises 466 residues: uncharacterized protein (466 aa).

Residues 1 to 22 (MKKNNERVNTNPSLISKSYNMK) are disordered. Residues 7–19 (RVNTNPSLISKSY) are compositionally biased toward polar residues. Residues Ser40 and Ser42 each carry the phosphoserine modification. In terms of domain architecture, RRM spans 108 to 183 (YFVHMDNISP…RLISATITNH (76 aa)). Residues 186 to 207 (RLPNAEHLESSTKTKDESQDKD) form a disordered region. Positions 188–207 (PNAEHLESSTKTKDESQDKD) are enriched in basic and acidic residues. A CID domain is found at 209–368 (LTKLDRAKLE…RAWRNFSGNT (160 aa)). The residue at position 371 (Ser371) is a Phosphoserine. Residues 425–436 (STETSSSSSPQP) show a composition bias toward low complexity. The tract at residues 425-448 (STETSSSSSPQPTEERKAKFKPSF) is disordered.

The protein resides in the nucleus. The protein localises to the cytoplasm. This is an uncharacterized protein from Schizosaccharomyces pombe (strain 972 / ATCC 24843) (Fission yeast).